Consider the following 366-residue polypeptide: Beta sliding clamp (366 aa).

Belongs to the beta sliding clamp family. In terms of assembly, forms a ring-shaped head-to-tail homodimer around DNA which binds and tethers DNA polymerases and other proteins to the DNA. The DNA replisome complex has a single clamp-loading complex (3 tau and 1 each of delta, delta', psi and chi subunits) which binds 3 Pol III cores (1 core on the leading strand and 2 on the lagging strand) each with a beta sliding clamp dimer. Additional proteins in the replisome are other copies of gamma, psi and chi, Ssb, DNA helicase and RNA primase.

Its subcellular location is the cytoplasm. Its function is as follows. Confers DNA tethering and processivity to DNA polymerases and other proteins. Acts as a clamp, forming a ring around DNA (a reaction catalyzed by the clamp-loading complex) which diffuses in an ATP-independent manner freely and bidirectionally along dsDNA. Initially characterized for its ability to contact the catalytic subunit of DNA polymerase III (Pol III), a complex, multichain enzyme responsible for most of the replicative synthesis in bacteria; Pol III exhibits 3'-5' exonuclease proofreading activity. The beta chain is required for initiation of replication as well as for processivity of DNA replication. The sequence is that of Beta sliding clamp (dnaN) from Salmonella typhimurium (strain LT2 / SGSC1412 / ATCC 700720).